The chain runs to 719 residues: Polyribonucleotide nucleotidyltransferase (719 aa).

Positions 491 and 497 each coordinate Mg(2+). Residues 558-617 (PRMLTIKINPEKIRDVIGKGGATIRALTEETGTQIDISDDGTIVIASVDETQAKEAQRRI) form the KH domain. One can recognise an S1 motif domain in the interval 627–695 (GQIYDGSVLR…DKGRLRLSIK (69 aa)).

This sequence belongs to the polyribonucleotide nucleotidyltransferase family. Requires Mg(2+) as cofactor.

The protein localises to the cytoplasm. The catalysed reaction is RNA(n+1) + phosphate = RNA(n) + a ribonucleoside 5'-diphosphate. Involved in mRNA degradation. Catalyzes the phosphorolysis of single-stranded polyribonucleotides processively in the 3'- to 5'-direction. The protein is Polyribonucleotide nucleotidyltransferase of Bordetella bronchiseptica (strain ATCC BAA-588 / NCTC 13252 / RB50) (Alcaligenes bronchisepticus).